A 417-amino-acid chain; its full sequence is Tyrosine aminotransferase (417 aa).

The residue at position 249 (Lys-249) is an N6-(pyridoxal phosphate)lysine.

It belongs to the class-I pyridoxal-phosphate-dependent aminotransferase family. As to quaternary structure, homodimer. Pyridoxal 5'-phosphate serves as cofactor.

The catalysed reaction is L-tyrosine + 2-oxoglutarate = 3-(4-hydroxyphenyl)pyruvate + L-glutamate. Its pathway is amino-acid degradation; L-phenylalanine degradation; acetoacetate and fumarate from L-phenylalanine: step 2/6. Functionally, transaminase involved in tyrosine breakdown. Converts tyrosine to p-hydroxyphenylpyruvate. Has much lower affinity and transaminase activity towards phenylalanine. In Dictyostelium discoideum (Social amoeba), this protein is Tyrosine aminotransferase (tat).